The sequence spans 714 residues: Glycine--tRNA ligase beta subunit (714 aa).

This sequence belongs to the class-II aminoacyl-tRNA synthetase family. Tetramer of two alpha and two beta subunits.

It localises to the cytoplasm. The catalysed reaction is tRNA(Gly) + glycine + ATP = glycyl-tRNA(Gly) + AMP + diphosphate. This chain is Glycine--tRNA ligase beta subunit, found in Rhodospirillum centenum (strain ATCC 51521 / SW).